A 291-amino-acid polypeptide reads, in one-letter code: Undecaprenyl-diphosphatase (291 aa).

8 helical membrane passes run 1–21, 48–68, 102–122, 126–146, 162–182, 203–223, 236–256, and 267–287; these read MFII…LTEF, SAFT…AWVF, LHVL…DDFI, LFSV…MIIA, INYF…WPGF, SDFT…LSLL, FYIL…KTFL, and FAIY…GFGI.

Belongs to the UppP family.

Its subcellular location is the cell membrane. The enzyme catalyses di-trans,octa-cis-undecaprenyl diphosphate + H2O = di-trans,octa-cis-undecaprenyl phosphate + phosphate + H(+). Catalyzes the dephosphorylation of undecaprenyl diphosphate (UPP). Confers resistance to bacitracin. This Staphylococcus aureus (strain MSSA476) protein is Undecaprenyl-diphosphatase.